The following is a 374-amino-acid chain: Mannitol-1-phosphate 5-dehydrogenase (374 aa).

3–14 (AIHFGAGNIGRG) contributes to the NAD(+) binding site.

This sequence belongs to the mannitol dehydrogenase family.

The catalysed reaction is D-mannitol 1-phosphate + NAD(+) = beta-D-fructose 6-phosphate + NADH + H(+). This Halalkalibacterium halodurans (strain ATCC BAA-125 / DSM 18197 / FERM 7344 / JCM 9153 / C-125) (Bacillus halodurans) protein is Mannitol-1-phosphate 5-dehydrogenase.